Reading from the N-terminus, the 142-residue chain is Large ribosomal subunit protein uL13 (142 aa).

The protein belongs to the universal ribosomal protein uL13 family. Part of the 50S ribosomal subunit.

Functionally, this protein is one of the early assembly proteins of the 50S ribosomal subunit, although it is not seen to bind rRNA by itself. It is important during the early stages of 50S assembly. This chain is Large ribosomal subunit protein uL13, found in Ralstonia nicotianae (strain ATCC BAA-1114 / GMI1000) (Ralstonia solanacearum).